A 412-amino-acid polypeptide reads, in one-letter code: 1-deoxy-D-xylulose 5-phosphate reductoisomerase (412 aa).

NADPH is bound by residues Thr10, Gly11, Ser12, Ile13, Gly36, Lys37, Asn38, and Asn130. Lys131 is a 1-deoxy-D-xylulose 5-phosphate binding site. NADPH is bound at residue Glu132. Asp156 is a binding site for Mn(2+). Residues Ser157, Glu158, Ser194, and His217 each coordinate 1-deoxy-D-xylulose 5-phosphate. Residue Glu158 coordinates Mn(2+). Residue Gly223 coordinates NADPH. Residues Ser230, Asn235, Lys236, and Glu239 each coordinate 1-deoxy-D-xylulose 5-phosphate. Glu239 is a Mn(2+) binding site.

This sequence belongs to the DXR family. It depends on Mg(2+) as a cofactor. Mn(2+) serves as cofactor.

The catalysed reaction is 2-C-methyl-D-erythritol 4-phosphate + NADP(+) = 1-deoxy-D-xylulose 5-phosphate + NADPH + H(+). It participates in isoprenoid biosynthesis; isopentenyl diphosphate biosynthesis via DXP pathway; isopentenyl diphosphate from 1-deoxy-D-xylulose 5-phosphate: step 1/6. In terms of biological role, catalyzes the NADPH-dependent rearrangement and reduction of 1-deoxy-D-xylulose-5-phosphate (DXP) to 2-C-methyl-D-erythritol 4-phosphate (MEP). The polypeptide is 1-deoxy-D-xylulose 5-phosphate reductoisomerase (Prochlorococcus marinus (strain NATL2A)).